A 396-amino-acid chain; its full sequence is Microcin B17-processing protein McbD (396 aa).

In terms of domain architecture, YcaO spans 41 to 396; sequence ASAAGETLKS…VRESKMVPFP (356 aa).

The protein resides in the cytoplasm. In terms of biological role, necessary to process the inactive microcin B17 (McbA) precursor into the active peptide. This is Microcin B17-processing protein McbD (mcbD) from Escherichia coli.